A 2582-amino-acid chain; its full sequence is Chromodomain-helicase-DNA-binding protein 8 (2582 aa).

Disordered regions lie at residues 22 to 111 (DDSF…PVLQ), 136 to 155 (MGVS…PSQS), 253 to 283 (VKGS…TQGE), and 349 to 377 (QKIQ…PLTL). 3 stretches are compositionally biased toward polar residues: residues 42-51 (SLDSLDQMNQ), 94-111 (DYTT…PVLQ), and 141-155 (TGVS…PSQS). A compositionally biased stretch (low complexity) spans 255 to 267 (GSAPAGNPGAAGP). The span at 355–372 (PQPPSSQPQPQPQPPPSA) shows a compositional bias: pro residues. Position 434 is a phosphoserine (Ser-434). Disordered stretches follow at residues 475 to 585 (RARG…VKRK) and 598 to 617 (DEEE…PILP). Over residues 495-518 (RPEEEGEKKRRKKSSGERLKEEKP) the composition is skewed to basic and acidic residues. A phosphoserine mark is found at Ser-555 and Ser-564. Basic residues predominate over residues 574 to 585 (QKRRSNRQVKRK). Lys-611 participates in a covalent cross-link: Glycyl lysine isopeptide (Lys-Gly) (interchain with G-Cter in SUMO). Chromo domains follow at residues 644 to 711 (AIVD…AQMR) and 726 to 792 (VEVD…RVNR). In terms of domain architecture, Helicase ATP-binding spans 825–999 (LFNWYNRQNC…FSLLHFLEPS (175 aa)). Residue 838–845 (DEMGLGKT) coordinates ATP. Residues 950-953 (DEAH) carry the DEAH box motif. The Helicase C-terminal domain maps to 1139-1290 (LIDKLLPKLK…KAVLQSMSGR (152 aa)). A phosphoserine mark is found at Ser-1422 and Ser-1426. Residues 1694–1715 (EDPEYKPLQGPPKDPDDEGDPL) are disordered. Residues 1791 to 2304 (IARREKQQRW…LVELEVECME (514 aa)) form an interaction with FAM124B region. Ser-1978 and Ser-1980 each carry phosphoserine. The disordered stretch occupies residues 1990–2019 (QCTSRTASPSPLRPDAPVEKSPEESTVQVP). Thr-1995 carries the phosphothreonine modification. Phosphoserine is present on residues Ser-1997, Ser-1999, and Ser-2010. A Glycyl lysine isopeptide (Lys-Gly) (interchain with G-Cter in SUMO2) cross-link involves residue Lys-2027. Residues Ser-2040, Ser-2070, and Ser-2072 each carry the phosphoserine modification. The disordered stretch occupies residues 2045-2120 (VRVGSSDTAP…RSRPKLYDEE (76 aa)). Residues 2065–2074 (EDEDDSDSEL) show a composition bias toward acidic residues. Low complexity predominate over residues 2077–2096 (SKLSPSSSSSSSSSSSSSST). The segment covering 2104–2118 (EEKLTADRSRPKLYD) has biased composition (basic and acidic residues). A phosphoserine mark is found at Ser-2184, Ser-2202, and Ser-2204. A disordered region spans residues 2187-2233 (VTAGGILGPGNHLLDSPSLTPGEDGDSPVPTPRSGSAASMAEEEASA). Thr-2206 carries the phosphothreonine modification. Phosphoserine is present on Ser-2213. Thr-2217 bears the Phosphothreonine mark. Residues 2222 to 2233 (SAASMAEEEASA) are compositionally biased toward low complexity. Ser-2225 carries the phosphoserine modification. A Glycyl lysine isopeptide (Lys-Gly) (interchain with G-Cter in SUMO2) cross-link involves residue Lys-2258. Positions 2486–2582 (HVDSSTMLHH…NSDSSEDADD (97 aa)) are disordered. Basic residues predominate over residues 2493-2511 (LHHHHHHPHPHHHHHHHPG). Positions 2514–2529 (TTGYPSSPATTTSGTA) are enriched in low complexity. Ser-2520 bears the Phosphoserine mark. Positions 2537-2551 (PEDDDEEEDEEDDDL) are enriched in acidic residues.

Belongs to the SNF2/RAD54 helicase family. CHD8 subfamily. Interacts with CTNNB1 and PIAS3. Component of some MLL1/MLL complex, at least composed of the core components KMT2A/MLL1, ASH2L, HCFC1/HCF1, WDR5 and RBBP5, as well as the facultative components BACC1, CHD8, E2F6, HSP70, INO80C, KANSL1, LAS1L, MAX, MCRS1, MGA, KAT8/MOF, PELP1, PHF20, PRP31, RING2, RUVB1/TIP49A, RUVB2/TIP49B, SENP3, TAF1, TAF4, TAF6, TAF7, TAF9 and TEX10. Interacts with CHD7. Interacts with FAM124B. Interacts with p53/TP53 and histone H1. Interacts with CTCF. Interacts with TLK2. Interacts with HNRNPL in an RNA-dependent manner. Sumoylated.

Its subcellular location is the nucleus. The enzyme catalyses ATP + H2O = ADP + phosphate + H(+). Functionally, ATP-dependent chromatin-remodeling factor, it slides nucleosomes along DNA; nucleosome sliding requires ATP. Acts as a transcription repressor by remodeling chromatin structure and recruiting histone H1 to target genes. Suppresses p53/TP53-mediated apoptosis by recruiting histone H1 and preventing p53/TP53 transactivation activity. Acts as a negative regulator of Wnt signaling pathway by regulating beta-catenin (CTNNB1) activity. Negatively regulates CTNNB1-targeted gene expression by being recruited specifically to the promoter regions of several CTNNB1 responsive genes. Involved in both enhancer blocking and epigenetic remodeling at chromatin boundary via its interaction with CTCF. Acts as a suppressor of STAT3 activity by suppressing the LIF-induced STAT3 transcriptional activity. Also acts as a transcription activator via its interaction with ZNF143 by participating in efficient U6 RNA polymerase III transcription. Regulates alternative splicing of a core group of genes involved in neuronal differentiation, cell cycle and DNA repair. Enables H3K36me3-coupled transcription elongation and co-transcriptional RNA processing likely via interaction with HNRNPL. In Mus musculus (Mouse), this protein is Chromodomain-helicase-DNA-binding protein 8.